Here is a 308-residue protein sequence, read N- to C-terminus: MFDPETLRTFISVAETGSFSKAAERLCKTTATISYRIKLLEENTGVGLFFRTTRSVSLTAAGSHLLSQAKDWLAWLDSMPDELRQVNDGVERQVNIVVNNLLYSPQAVASLLSWLNARYPFTQFHFSRQIYMGVWDSLLYEGFSLAIGVTGTEPLANTFMLDPLGSVQWRFVMSADHPLAHVSGPLTEAQLRRFPAINIEDSARTLTKRVAWRLPGQKEIIVPDMETKIAAHLAGVGIGFVPQPLCQTLIDKNELVSCTIPTMRPPSPLSLAWHKFGGGKAVEDIVKLFTQRQPEIAGFLSIFNTVRC.

Residues 2–59 (FDPETLRTFISVAETGSFSKAAERLCKTTATISYRIKLLEENTGVGLFFRTTRSVSLT) form the HTH lysR-type domain. The H-T-H motif DNA-binding region spans 19–38 (FSKAAERLCKTTATISYRIK).

This sequence belongs to the LysR transcriptional regulatory family.

Its function is as follows. Positive regulator essential for the expression of allD operon. Binds to the allD promoter. In Salmonella paratyphi A (strain ATCC 9150 / SARB42), this protein is HTH-type transcriptional activator AllS (allS).